A 1012-amino-acid chain; its full sequence is DNA polymerase gamma (1012 aa).

It belongs to the DNA polymerase type-A family. Requires Mg(2+) as cofactor.

It is found in the mitochondrion. It carries out the reaction DNA(n) + a 2'-deoxyribonucleoside 5'-triphosphate = DNA(n+1) + diphosphate. Involved in the replication of mitochondrial DNA. The protein is DNA polymerase gamma (MIP1) of Komagataella pastoris (Yeast).